We begin with the raw amino-acid sequence, 238 residues long: Tetraspanin-4 (238 aa).

Topologically, residues 1-13 are cytoplasmic; that stretch reads MARACLQAVKYLM. A helical transmembrane segment spans residues 14-34; the sequence is FAFNLLFWLGGCGVLGVGIWL. At 35–55 the chain is on the extracellular side; sequence AATQGSFATLSSSFPSLSAAN. The helical transmembrane segment at 56–76 threads the bilayer; that stretch reads LLIITGAFVMAIGFVGCLGAI. The Cytoplasmic portion of the chain corresponds to 77-85; it reads KENKCLLLT. Residues 86–106 form a helical membrane-spanning segment; the sequence is FFLLLLLVFLLEATIAILFFA. Residues 107 to 201 lie on the Extracellular side of the membrane; that stretch reads YTDKIDRYAQ…ETVKVWLQEN (95 aa). Asn-152 and Asn-161 each carry an N-linked (GlcNAc...) asparagine glycan. The chain crosses the membrane as a helical span at residues 202 to 222; the sequence is LLAVGIFGLCTALVQILGLTF. Topologically, residues 223-238 are cytoplasmic; it reads AMTMYCQVVKADTYCA.

It belongs to the tetraspanin (TM4SF) family. In terms of assembly, forms a complex with integrins. Interacts with HRH4. As to expression, expressed in multiple tissues but is absent in brain, lymphoid cells, and platelets.

The protein localises to the cell membrane. Its function is as follows. Structural component of specialized membrane microdomains known as tetraspanin-enriched microdomains (TERMs), which act as platforms for receptor clustering and signaling. Plays an essential role in migrasome formation and migration on retracting fibers at the rear end of migrating cells. Migrasomes are cellular organelles that form as large vesicle-like structures on retraction fibers of migrating cells. Mechanistically, acts as a membrane curvature sensor and participates in stabilizing the migrasome structure in a late stage of biogenesis. May also play a regulatory role for the histamine H4 receptor/HRH4 without affecting histamine binding to HRH4 or signaling. In Homo sapiens (Human), this protein is Tetraspanin-4 (TSPAN4).